The primary structure comprises 468 residues: Cysteine--tRNA ligase (468 aa).

Zn(2+) is bound at residue Cys-36. Positions 38–48 (PTVYNRSHIGN) match the 'HIGH' region motif. Residues Cys-216, His-241, and Glu-245 each coordinate Zn(2+). The 'KMSKS' region motif lies at 274-278 (KMSKS). Lys-277 is an ATP binding site.

The protein belongs to the class-I aminoacyl-tRNA synthetase family. Monomer. Requires Zn(2+) as cofactor.

The protein localises to the cytoplasm. It carries out the reaction tRNA(Cys) + L-cysteine + ATP = L-cysteinyl-tRNA(Cys) + AMP + diphosphate. This is Cysteine--tRNA ligase from Parvibaculum lavamentivorans (strain DS-1 / DSM 13023 / NCIMB 13966).